Consider the following 81-residue polypeptide: Sulfur carrier protein TusA (81 aa).

Cysteine 19 (cysteine persulfide intermediate) is an active-site residue.

It belongs to the sulfur carrier protein TusA family.

The protein localises to the cytoplasm. Functionally, sulfur carrier protein which probably makes part of a sulfur-relay system. This Vibrio vulnificus (strain CMCP6) protein is Sulfur carrier protein TusA.